A 293-amino-acid chain; its full sequence is Glycine--tRNA ligase alpha subunit (293 aa).

It belongs to the class-II aminoacyl-tRNA synthetase family. Tetramer of two alpha and two beta subunits.

Its subcellular location is the cytoplasm. The enzyme catalyses tRNA(Gly) + glycine + ATP = glycyl-tRNA(Gly) + AMP + diphosphate. The polypeptide is Glycine--tRNA ligase alpha subunit (Picosynechococcus sp. (strain ATCC 27264 / PCC 7002 / PR-6) (Agmenellum quadruplicatum)).